A 172-amino-acid chain; its full sequence is Zinc finger C2HC domain-containing protein 1B (172 aa).

2 consecutive C2HC/C3H-type zinc fingers follow at residues 14–43 and 117–146; these read KLFP…VFNK and DYIQ…QTSR. Residues cysteine 18, cysteine 21, histidine 33, cysteine 37, cysteine 121, cysteine 124, histidine 136, and cysteine 140 each contribute to the Zn(2+) site.

It belongs to the ZC2HC1 family. Requires Zn(2+) as cofactor.

The chain is Zinc finger C2HC domain-containing protein 1B (Zc2hc1b) from Mus musculus (Mouse).